Here is a 466-residue protein sequence, read N- to C-terminus: Teichoic acids export ATP-binding protein TagH (466 aa).

The 223-residue stretch at 27–249 (NKAKSLIGSN…YEKFVQWFKK (223 aa)) folds into the ABC transporter domain. 63-70 (GLNGAGKS) is a binding site for ATP. The tract at residues 250-466 (LPKKEQEKFK…TTEQSDGANQ (217 aa)) is unknown. Disordered stretches follow at residues 356-403 (NMTS…SNQN) and 439-466 (IHPGQEINLPEPTTSANSTTEQSDGANQ). Over residues 373–384 (PKKKVSQAKKTT) the composition is skewed to basic residues. The segment covering 385–403 (KVSSTQKNTSSSSSTSNQN) has biased composition (low complexity). Positions 403–447 (NTYIVQAGDSLSIIAENHGYSVEEIQQVNPGVDFSVIHPGQEINL) constitute a LysM domain. Residues 449–466 (EPTTSANSTTEQSDGANQ) show a composition bias toward polar residues.

Belongs to the ABC transporter superfamily. Teichoic acids exporter (TC 3.A.1.104.1) family. As to quaternary structure, the complex is composed of two ATP-binding proteins (TagH) and two transmembrane proteins (TagG).

The protein resides in the cell membrane. The catalysed reaction is ATP + H2O + teichoic acidSide 1 = ADP + phosphate + teichoic acidSide 2.. Part of the ABC transporter complex TagGH involved in teichoic acids export. Responsible for energy coupling to the transport system. The polypeptide is Teichoic acids export ATP-binding protein TagH (Lactococcus lactis subsp. lactis (strain IL1403) (Streptococcus lactis)).